The primary structure comprises 218 residues: Calcineurin B-like protein 5 (218 aa).

4 consecutive EF-hand domains span residues 35 to 69, 70 to 105, 107 to 142, and 151 to 186; these read EVEA…FRNK, KTNL…FHPD, PEEQ…LLDE, and AVEM…NPYV.

The protein belongs to the calcineurin regulatory subunit family. As to quaternary structure, homodimer. As to expression, expressed at low levels in roots, shoots, culms, leaves and young spikelets.

Its function is as follows. Acts as a calcium sensor. CBL proteins interact with CIPK serine-threonine protein kinases. Binding of a CBL protein to the regulatory NAF domain of a CIPK protein lead to the activation of the kinase in a calcium-dependent manner. The chain is Calcineurin B-like protein 5 (CBL5) from Oryza sativa subsp. japonica (Rice).